A 297-amino-acid polypeptide reads, in one-letter code: tRNA dimethylallyltransferase (297 aa).

An ATP-binding site is contributed by 15–22 (GPTASGKS). Substrate is bound at residue 17-22 (TASGKS). 2 interaction with substrate tRNA regions span residues 40-43 (DSMQ) and 164-168 (QRIVR).

This sequence belongs to the IPP transferase family. In terms of assembly, monomer. Mg(2+) serves as cofactor.

It catalyses the reaction adenosine(37) in tRNA + dimethylallyl diphosphate = N(6)-dimethylallyladenosine(37) in tRNA + diphosphate. In terms of biological role, catalyzes the transfer of a dimethylallyl group onto the adenine at position 37 in tRNAs that read codons beginning with uridine, leading to the formation of N6-(dimethylallyl)adenosine (i(6)A). This is tRNA dimethylallyltransferase from Rhizobium etli (strain ATCC 51251 / DSM 11541 / JCM 21823 / NBRC 15573 / CFN 42).